Reading from the N-terminus, the 130-residue chain is Small ribosomal subunit protein uS9 (130 aa).

It belongs to the universal ribosomal protein uS9 family.

This chain is Small ribosomal subunit protein uS9, found in Exiguobacterium sibiricum (strain DSM 17290 / CCUG 55495 / CIP 109462 / JCM 13490 / 255-15).